The sequence spans 675 residues: Regulator of G-protein signaling 9 (675 aa).

Residues proline 30–threonine 105 form the DEP domain. In terms of domain architecture, G protein gamma spans valine 222–lysine 283. The 116-residue stretch at asparagine 299–leucine 414 folds into the RGS domain. Disordered stretches follow at residues arginine 524–alanine 571 and aspartate 637–valine 662. Residues serine 542–threonine 551 show a composition bias toward polar residues. Basic and acidic residues-rich tracts occupy residues glutamate 552 to arginine 562 and aspartate 646 to valine 662.

Heterodimer with GNB5. Interacts with RGS7BP, leading to regulate the subcellular location of the heterodimer formed with GNB5. Component of the RGS9-1-Gbeta5 complex composed of RGS9 (RGS9-1), Gbeta5 (GNB5) and RGS9BP. Interacts with PDE6G and GNAT1. Retinal isoform 1 is light-dependent phosphorylated at 'Ser-475'. Phosphorylation is decreased by light exposition. Interaction with RGS9BP is decreased when isoform 1 is phosphorylated at 'Ser-475'. Isoform 1 is expressed in photoreceptor outer segments. Isoform 2 is expressed in brain striatum.

The protein resides in the membrane. Inhibits signal transduction by increasing the GTPase activity of G protein alpha subunits thereby driving them into their inactive GDP-bound form. Binds to GNAT1. Involved in phototransduction; key element in the recovery phase of visual transduction. This chain is Regulator of G-protein signaling 9 (Rgs9), found in Mus musculus (Mouse).